We begin with the raw amino-acid sequence, 122 residues long: Large ribosomal subunit protein uL18 (122 aa).

It belongs to the universal ribosomal protein uL18 family. As to quaternary structure, part of the 50S ribosomal subunit; part of the 5S rRNA/L5/L18/L25 subcomplex. Contacts the 5S and 23S rRNAs.

In terms of biological role, this is one of the proteins that bind and probably mediate the attachment of the 5S RNA into the large ribosomal subunit, where it forms part of the central protuberance. The protein is Large ribosomal subunit protein uL18 of Mycobacterium leprae (strain TN).